Reading from the N-terminus, the 990-residue chain is MASSKNMPSRITQKSMEPPLRETWQQVVQEMVMRKQRDEEEKQNLVTGKEKSWVSIDLLGTKQEGKRQKVNIWGPWEKWGIKIVWVMLWVIQLMLWGCLIWEMGKKHSCNAEEVIALVDDPGGFQKVKYVESVPVTCMTKNFTQWGCQPEGAYPDPDLEYRNISQDILEQVYKQEWPWNTYHWPLWQMENMRQWMKENEKEYTSRNNKTKEDIDALLAGKIRGRFCVPYPFALLKCEEWCWYPANINQETGHAQQIKINCTKAKAVSCTEQMPLAAVQRVYWEKEDEEGMKFMNIQACNESQLRCKTSPGGCVQGYPIPVGAEIIPESMKYLRGKKSPYGGIKDKNGELKLPLSVRVWVRMANLSGWVNGTPPYWSARIKGSTGINGTRWYGIGTLHHLGYNISSNPEKGLCNFTKELWIGGDRFQYQYKPSWNCSQNWTGYPVWHVFRYLDMTEHMTSRCVQRPLRHNITVGNGTITGNCSVTDWEGCNCTRSGNYLYNSTTGGLLVIICRQNSTITGIMGTNTNWTTMWGIYKNCSECKNSTLDRTDNGTLGTVNNINCSLPHYNESNKWTCAARNSKKKRDSLYIAGRDFWGRVKALYSCESNLGGLDGMMHQQMVLQKYQVIKVRAYTYGVVDMPKAYREKNMRNKRSTEISRPRKKRGIGLVIVLAIMAIIAAAGAGLGVANAVQQSYTRTAVQSLANATAAQQNVLEATYAMVQHVAKGVRILEARVARVEAIVDRMMLYHELDCWHYQHYCVTSTRTEVAQYVNWTRYKDNCTWQQWEEEIEQHEANLSLLLKEAALQVQIAQRDAQRIPDVWKALQEAFDWSGWFSWLKYIPWIVVCIVGVICFRLLMCVITMCLQAYRQVREIRYTRVTVVIEAPVDLEEKQREERDGSSGSENLEHEKRTSPRSFIQIWRATVQAWKTSPWGKGWKKILYMTLLPLLTLQIWMEETGWNGDKRCKKKKERVDCQDRESMPAIENEYVELS.

Positions Met-1–His-107 are cleaved as a signal peptide. Residues Ser-108–Tyr-838 lie on the Extracellular side of the membrane. N-linked (GlcNAc...) asparagine; by host glycosylation is found at Asn-141, Asn-162, Asn-207, Asn-259, Asn-299, Asn-363, Asn-386, Asn-402, Asn-413, Asn-434, Asn-438, Asn-469, Asn-474, Asn-480, Asn-490, Asn-500, Asn-514, Asn-526, Asn-536, Asn-542, Asn-550, Asn-560, and Asn-567. Residues Gly-663–Leu-683 are fusion peptide. The stretch at Arg-695–Leu-745 forms a coiled coil. A glycan (N-linked (GlcNAc...) asparagine; by host) is linked at Asn-703. The segment at Leu-729–Leu-745 is immunosuppression. Residues Asn-771, Asn-778, and Asn-794 are each glycosylated (N-linked (GlcNAc...) asparagine; by host). Positions Glu-786–Lys-821 form a coiled coil. A helical membrane pass occupies residues Ile-839–Ile-859. The Cytoplasmic portion of the chain corresponds to Thr-860–Ser-990. Cys-862 is lipidated: S-palmitoyl cysteine; by host. The interval Lys-890–Arg-909 is disordered.

In terms of assembly, the mature envelope protein (Env) consists of a trimer of SU-TM heterodimers attached by noncovalent interactions or by a labile interchain disulfide bond. Post-translationally, specific enzymatic cleavages in vivo yield mature proteins. Envelope glycoproteins are synthesized as an inactive precursor that is N-glycosylated and processed likely by host cell furin or by a furin-like protease in the Golgi to yield the mature SU and TM proteins. The cleavage site between SU and TM requires the minimal sequence [KR]-X-[KR]-R. The transmembrane protein is palmitoylated.

It is found in the virion membrane. It localises to the host cell membrane. In terms of biological role, the surface protein (SU) attaches the virus to the host cell by binding to its receptor. This interaction triggers the refolding of the transmembrane protein (TM) and is thought to activate its fusogenic potential by unmasking its fusion peptide. Fusion occurs at the host cell plasma membrane. Functionally, the transmembrane protein (TM) acts as a class I viral fusion protein. Under the current model, the protein has at least 3 conformational states: pre-fusion native state, pre-hairpin intermediate state, and post-fusion hairpin state. During viral and target cell membrane fusion, the coiled coil regions (heptad repeats) assume a trimer-of-hairpins structure, positioning the fusion peptide in close proximity to the C-terminal region of the ectodomain. The formation of this structure appears to drive apposition and subsequent fusion of viral and target cell membranes. Membranes fusion leads to delivery of the nucleocapsid into the cytoplasm. The protein is Envelope glycoprotein gp160 (env) of Ovine maedi visna related virus (strain South Africa) (SA-OMVV).